A 227-amino-acid chain; its full sequence is PKHD-type hydroxylase BURPS668_A1690 (227 aa).

The Fe2OG dioxygenase domain occupies 78–178 (KVFPPLFNRY…RVASFFWIQS (101 aa)). 3 residues coordinate Fe cation: His-96, Asp-98, and His-159. Arg-169 provides a ligand contact to 2-oxoglutarate.

The cofactor is Fe(2+). L-ascorbate serves as cofactor.

The protein is PKHD-type hydroxylase BURPS668_A1690 of Burkholderia pseudomallei (strain 668).